The primary structure comprises 240 residues: Urease accessory protein UreF (240 aa).

It belongs to the UreF family. As to quaternary structure, ureD, UreF and UreG form a complex that acts as a GTP-hydrolysis-dependent molecular chaperone, activating the urease apoprotein by helping to assemble the nickel containing metallocenter of UreC. The UreE protein probably delivers the nickel.

The protein localises to the cytoplasm. Functionally, required for maturation of urease via the functional incorporation of the urease nickel metallocenter. This chain is Urease accessory protein UreF, found in Bradyrhizobium sp. (strain BTAi1 / ATCC BAA-1182).